The chain runs to 314 residues: Electron transfer flavoprotein subunit alpha (314 aa).

Residue 253–281 (LYVAVGISGAIQHLAGMKDSKVIVAINKD) participates in FAD binding.

This sequence belongs to the ETF alpha-subunit/FixB family. Heterodimer of an alpha and a beta subunit. FAD is required as a cofactor.

In terms of biological role, the electron transfer flavoprotein serves as a specific electron acceptor for other dehydrogenases. It transfers the electrons to the main respiratory chain via ETF-ubiquinone oxidoreductase (ETF dehydrogenase). The polypeptide is Electron transfer flavoprotein subunit alpha (etfA) (Bradyrhizobium diazoefficiens (strain JCM 10833 / BCRC 13528 / IAM 13628 / NBRC 14792 / USDA 110)).